The primary structure comprises 122 residues: Large ribosomal subunit protein uL14 (122 aa).

Belongs to the universal ribosomal protein uL14 family. As to quaternary structure, part of the 50S ribosomal subunit. Forms a cluster with proteins L3 and L19. In the 70S ribosome, L14 and L19 interact and together make contacts with the 16S rRNA in bridges B5 and B8.

Its function is as follows. Binds to 23S rRNA. Forms part of two intersubunit bridges in the 70S ribosome. This chain is Large ribosomal subunit protein uL14, found in Thermosipho melanesiensis (strain DSM 12029 / CIP 104789 / BI429).